The following is a 2103-amino-acid chain: uncharacterized protein (2103 aa).

Over residues 1–12 (MSVPGTPGAMEP) the composition is skewed to low complexity. Positions 1-61 (MSVPGTPGAM…DADDQEEEME (61 aa)) are disordered. The span at 51–61 (EDADDQEEEME) shows a compositional bias: acidic residues. In terms of domain architecture, Bromo spans 77-196 (YELQQGYRIL…MMLEQKLALL (120 aa)). Disordered regions lie at residues 730 to 750 (AKHK…ITKK), 853 to 881 (NREL…SIDS), 933 to 956 (QSKQ…AKLS), 1224 to 1244 (SASP…TLNG), and 1770 to 1817 (GATR…STSP). Residues 865–877 (DLGKDSPKGEISK) are compositionally biased toward basic and acidic residues. Residues 1224-1234 (SASPTISSTGQ) show a composition bias toward polar residues. Positions 1235–1244 (PLSSTTTLNG) are enriched in low complexity. The segment covering 1773-1794 (RSVSISKRQSRTSLQFHSPGIS) has biased composition (polar residues). Over residues 1795–1808 (TTVPTNVNTNKPQT) the composition is skewed to low complexity.

It localises to the nucleus. This is an uncharacterized protein from Homo sapiens (Human).